We begin with the raw amino-acid sequence, 263 residues long: MKNAFKDALKAGRPQIGLWLGLANSYSAELLAGAGFDWLLIDGEHAPNNVQTVLTQLQAIAPYPSQPVVRPSWNDPVQIKQLLDVGAQTLLIPMVQNADEARNAVAATRYPPAGIRGVGSALARASRWNRIPDYLHQANDAMCVLVQIETREAMSNLASILDVDGIDGVFIGPADLSADMGFAGNPQHPEVQAAIENAIVQIRAAGKAPGILMANEALAKRYLELGALFVAVGVDTTLLARGAEALAARFGAEKKLSGASGVY.

His-45 serves as the catalytic Proton acceptor. A substrate-binding site is contributed by Gln-147. Glu-149 contacts a divalent metal cation. Residues Ala-174 and Asp-175 each coordinate substrate. Residue Asp-175 participates in a divalent metal cation binding.

The protein belongs to the HpcH/HpaI aldolase family. In terms of assembly, homohexamer; trimer of dimers. A divalent metal cation serves as cofactor.

The catalysed reaction is 4-hydroxy-2-oxoheptanedioate = succinate semialdehyde + pyruvate. The protein operates within aromatic compound metabolism; 4-hydroxyphenylacetate degradation; pyruvate and succinate semialdehyde from 4-hydroxyphenylacetate: step 7/7. Catalyzes the reversible retro-aldol cleavage of 4-hydroxy-2-ketoheptane-1,7-dioate (HKHD) to pyruvate and succinic semialdehyde. The protein is 4-hydroxy-2-oxo-heptane-1,7-dioate aldolase of Salmonella enteritidis PT4 (strain P125109).